Here is an 84-residue protein sequence, read N- to C-terminus: Small ribosomal subunit protein bS18 (84 aa).

This sequence belongs to the bacterial ribosomal protein bS18 family. In terms of assembly, part of the 30S ribosomal subunit. Forms a tight heterodimer with protein bS6.

Functionally, binds as a heterodimer with protein bS6 to the central domain of the 16S rRNA, where it helps stabilize the platform of the 30S subunit. This Mycobacterium sp. (strain JLS) protein is Small ribosomal subunit protein bS18.